Here is a 126-residue protein sequence, read N- to C-terminus: Cornifin alpha (126 aa).

At Ser2 the chain carries N-acetylserine. 13 tandem repeats follow at residues 3 to 14 (SQQQKQPCTLPP), 18 to 29 (QHQVKQPCQPPP), 31 to 38 (EPCVPKTK), 39 to 46 (EPCQPKVP), 47 to 54 (EPCQPKVP), 55 to 62 (EPCQPKVP), 63 to 70 (EPCQPKVP), 71 to 78 (QPCQPKVP), 79 to 86 (EPCQPKVP), 87 to 94 (EPCQPKVP), 95 to 102 (EPCQPKVP), 103 to 110 (EPCQSKVP), and 111 to 118 (QPCQPKVP). The 2 X 12 AA approximate repeats stretch occupies residues 3–29 (SQQQKQPCTLPPQLQQHQVKQPCQPPP). The segment at 20–43 (QVKQPCQPPPQEPCVPKTKEPCQP) is disordered. The segment at 31–122 (EPCVPKTKEP…CQPKVPEPCQ (92 aa)) is 11 X 8 AA approximate tandem repeats. Residues 104-126 (PCQSKVPQPCQPKVPEPCQTKQK) form a disordered region.

It belongs to the cornifin (SPRR) family. In terms of tissue distribution, suprabasal layers of squamous-differentiated tissues such as epidermis, esophagus, tongue and trachea.

It localises to the cytoplasm. Cross-linked envelope protein of keratinocytes. It is a keratinocyte protein that first appears in the cell cytosol, but ultimately becomes cross-linked to membrane proteins by transglutaminase. All that results in the formation of an insoluble envelope beneath the plasma membrane. This Oryctolagus cuniculus (Rabbit) protein is Cornifin alpha.